The following is a 498-amino-acid chain: ATP synthase subunit beta, chloroplastic (498 aa).

Residue 172-179 participates in ATP binding; it reads GGAGVGKT.

It belongs to the ATPase alpha/beta chains family. As to quaternary structure, F-type ATPases have 2 components, CF(1) - the catalytic core - and CF(0) - the membrane proton channel. CF(1) has five subunits: alpha(3), beta(3), gamma(1), delta(1), epsilon(1). CF(0) has four main subunits: a(1), b(1), b'(1) and c(9-12).

It localises to the plastid. The protein resides in the chloroplast thylakoid membrane. It catalyses the reaction ATP + H2O + 4 H(+)(in) = ADP + phosphate + 5 H(+)(out). Its function is as follows. Produces ATP from ADP in the presence of a proton gradient across the membrane. The catalytic sites are hosted primarily by the beta subunits. The sequence is that of ATP synthase subunit beta, chloroplastic from Gossypium barbadense (Sea Island cotton).